We begin with the raw amino-acid sequence, 453 residues long: C4-dicarboxylate TRAP transporter large permease protein DctM (453 aa).

13 helical membrane passes run 2–22 (AVALLFILVIGMMIVGVPIAI), 50–70 (AFAGHYTLLAIPFFILASTFM), 82–102 (FAIAMVGWFRGGLAIASVVAC), 104–124 (MFAALSGSSPATVVAIGSIVI), 139–159 (GVICNAGTLGILIPPSIVMVV), 172–192 (FLGGVVPGLLAGLMLIIAIYI), 217–237 (ASWGLLLVVIILGGIYGGIFT), 243–263 (AVAAVYSFFIANFIYRDMGPF), 289–309 (LYDAGKLTIMLMFIIANALIL), 326–346 (MLSAGLGPITFLIVVNLILLV), 356–376 (LLVIVAPLVFPIAIALGIDPI), 380–400 (IMMVVNMEIGMITPPVGLNLF), and 417–437 (ALPWVGVMFLFLIIVTYVPWV).

It belongs to the TRAP transporter large permease family. As to quaternary structure, the complex comprises the extracytoplasmic solute receptor protein DctP, and the two transmembrane proteins DctQ and DctM.

Its subcellular location is the cell inner membrane. Part of the tripartite ATP-independent periplasmic (TRAP) transport system DctPQM involved in C4-dicarboxylates uptake. The protein is C4-dicarboxylate TRAP transporter large permease protein DctM of Vibrio cholerae serotype O1 (strain ATCC 39315 / El Tor Inaba N16961).